The primary structure comprises 424 residues: Glutamyl-tRNA reductase (424 aa).

Residues 49–52 (TCNR), S105, 110–112 (EPQ), and Q116 each bind substrate. C50 serves as the catalytic Nucleophile. Residue 185-190 (GSGETA) participates in NADP(+) binding.

This sequence belongs to the glutamyl-tRNA reductase family. Homodimer.

It carries out the reaction (S)-4-amino-5-oxopentanoate + tRNA(Glu) + NADP(+) = L-glutamyl-tRNA(Glu) + NADPH + H(+). It functions in the pathway porphyrin-containing compound metabolism; protoporphyrin-IX biosynthesis; 5-aminolevulinate from L-glutamyl-tRNA(Glu): step 1/2. Functionally, catalyzes the NADPH-dependent reduction of glutamyl-tRNA(Glu) to glutamate 1-semialdehyde (GSA). This chain is Glutamyl-tRNA reductase, found in Legionella pneumophila (strain Lens).